Here is a 164-residue protein sequence, read N- to C-terminus: uncharacterized protein (164 aa).

This is an uncharacterized protein from Escherichia coli (strain K12).